Reading from the N-terminus, the 101-residue chain is UPF0235 protein Maeo_0841 (101 aa).

Belongs to the UPF0235 family.

The protein is UPF0235 protein Maeo_0841 of Methanococcus aeolicus (strain ATCC BAA-1280 / DSM 17508 / OCM 812 / Nankai-3).